A 129-amino-acid polypeptide reads, in one-letter code: Small ribosomal subunit protein uS13 (129 aa).

Residues 96–129 (GLPVRGQRTSTNARTRKGPRKTVGVSKAAAAAKA) are disordered.

It belongs to the universal ribosomal protein uS13 family. As to quaternary structure, part of the 30S ribosomal subunit. Forms a loose heterodimer with protein S19. Forms two bridges to the 50S subunit in the 70S ribosome.

In terms of biological role, located at the top of the head of the 30S subunit, it contacts several helices of the 16S rRNA. In the 70S ribosome it contacts the 23S rRNA (bridge B1a) and protein L5 of the 50S subunit (bridge B1b), connecting the 2 subunits; these bridges are implicated in subunit movement. Contacts the tRNAs in the A and P-sites. The polypeptide is Small ribosomal subunit protein uS13 (Opitutus terrae (strain DSM 11246 / JCM 15787 / PB90-1)).